Consider the following 1113-residue polypeptide: Centrosomal protein of 131 kDa (1113 aa).

2 disordered regions span residues 78-97 and 232-267; these read RRSN…LSSE and KSQK…TEEE. Positions 79–97 are enriched in polar residues; that stretch reads RSNSTTQVNQQANTSLSSE. Positions 238 to 257 are enriched in low complexity; it reads SSASSSSNNNAPRSPRSPGQ. Residues 259-371 are a coiled coil; that stretch reads RRREVTEEEA…QQIAEQETEA (113 aa). The region spanning 276–296 is the IQ domain; the sequence is NHAAIIIQRWYRRHVNSKRAN. Disordered stretches follow at residues 306–331, 368–401, and 438–458; these read SKKK…EDDR, ETEA…NTDS, and SVSM…SKTT. Residues 307–331 are compositionally biased toward basic and acidic residues; sequence KKKEREQRAEEAKTTESLKKKEDDR. The span at 374–384 shows a compositional bias: basic residues; sequence HPGKVGRKKLT. Low complexity predominate over residues 446-458; the sequence is QGASSSRAQSKTT. A coiled-coil region spans residues 580–1111; it reads SMMRLRLELD…LLEQQRKQLL (532 aa).

It belongs to the CEP131 family.

Its subcellular location is the chromosome. The protein localises to the centromere. The protein resides in the cytoplasm. It is found in the cytoskeleton. It localises to the microtubule organizing center. Its subcellular location is the centrosome. The protein localises to the centriolar satellite. The protein resides in the cilium basal body. It is found in the cytoplasmic vesicle. It localises to the secretory vesicle. Its subcellular location is the acrosome. Functionally, cilium-specific protein required for the regulation of cilium/flagellum formation. Involved in centriole duplication. May play a role in melanosome trafficking. This chain is Centrosomal protein of 131 kDa (cep131), found in Danio rerio (Zebrafish).